The sequence spans 606 residues: Aspartate--tRNA(Asp/Asn) ligase (606 aa).

Glu-177 provides a ligand contact to L-aspartate. The segment at 201–204 is aspartate; sequence QLFK. Arg-223 serves as a coordination point for L-aspartate. ATP is bound by residues 223–225 and Gln-232; that span reads RDE. His-461 contacts L-aspartate. An ATP-binding site is contributed by Glu-499. Arg-506 lines the L-aspartate pocket. Residue 551 to 554 coordinates ATP; the sequence is GMDR.

Belongs to the class-II aminoacyl-tRNA synthetase family. Type 1 subfamily. As to quaternary structure, homodimer.

It localises to the cytoplasm. The enzyme catalyses tRNA(Asx) + L-aspartate + ATP = L-aspartyl-tRNA(Asx) + AMP + diphosphate. In terms of biological role, aspartyl-tRNA synthetase with relaxed tRNA specificity since it is able to aspartylate not only its cognate tRNA(Asp) but also tRNA(Asn). Reaction proceeds in two steps: L-aspartate is first activated by ATP to form Asp-AMP and then transferred to the acceptor end of tRNA(Asp/Asn). The protein is Aspartate--tRNA(Asp/Asn) ligase of Prochlorococcus marinus (strain MIT 9313).